A 1072-amino-acid chain; its full sequence is Rho family-interacting cell polarization regulator 2 (1072 aa).

Positions 83 to 112 form a coiled coil; that stretch reads NGLDEYLEVHQTELDKLTAQLKDMRRNSRL. The necessary for interaction with NCAM and myoblast protrusion formation stretch occupies residues 173-470; it reads RESLTEINRS…ATTATQHRAR (298 aa). 2 disordered regions span residues 439–465 and 683–718; these read DRVP…TTAT and EVEK…AGSP. Residues 447–460 are compositionally biased toward polar residues; sequence AEPSSAHVTSSPDI. Basic and acidic residues predominate over residues 683-698; that stretch reads EVEKNSYRTEHPEARG.

Belongs to the RIPOR family. In terms of assembly, homooligomer; homooligomerization is regulated by RHOC and leads to the formation of concatemers through the association of N- and C-termini. Interacts with NCAM; this interaction is necessary for myoblast protrusion formation. As to expression, expressed in myoblast and myotubes (at protein level). Expressed in brain, eyes and skeletal muscle.

The protein resides in the cytoplasm. The protein localises to the cytoskeleton. It localises to the cell projection. It is found in the filopodium. Its subcellular location is the apical cell membrane. The protein resides in the stereocilium. The protein localises to the stereocilium membrane. Functionally, acts as an inhibitor of the small GTPase RHOA and plays several roles in the regulation of myoblast and hair cell differentiation, lymphocyte T proliferation and neutrophil polarization. Plays a role in fetal mononuclear myoblast differentiation by promoting filopodia and myotube formation. Maintains naive T lymphocytes in a quiescent state and prevents chemokine-induced T lymphocyte responses, such as cell adhesion, polarization and migration. Involved also in the regulation of neutrophil polarization, chemotaxis and adhesion. Required for normal development of inner and outer hair cell stereocilia within the cochlea of the inner ear. Plays a role for maintaining the structural organization of the basal domain of stereocilia. Involved in mechanosensory hair cell function. Required for normal hearing. The polypeptide is Rho family-interacting cell polarization regulator 2 (Coturnix japonica (Japanese quail)).